A 671-amino-acid polypeptide reads, in one-letter code: DNA ligase (671 aa).

NAD(+) is bound by residues 32 to 36 (DAEYD), 81 to 82 (SL), and glutamate 113. Lysine 115 acts as the N6-AMP-lysine intermediate in catalysis. NAD(+) contacts are provided by arginine 136, glutamate 173, lysine 290, and lysine 314. Cysteine 408, cysteine 411, cysteine 426, and cysteine 432 together coordinate Zn(2+). Residues 593–671 (EIDSPFAGKT…EAEMMRLLGE (79 aa)) enclose the BRCT domain.

It belongs to the NAD-dependent DNA ligase family. LigA subfamily. The cofactor is Mg(2+). Requires Mn(2+) as cofactor.

It carries out the reaction NAD(+) + (deoxyribonucleotide)n-3'-hydroxyl + 5'-phospho-(deoxyribonucleotide)m = (deoxyribonucleotide)n+m + AMP + beta-nicotinamide D-nucleotide.. Its function is as follows. DNA ligase that catalyzes the formation of phosphodiester linkages between 5'-phosphoryl and 3'-hydroxyl groups in double-stranded DNA using NAD as a coenzyme and as the energy source for the reaction. It is essential for DNA replication and repair of damaged DNA. The polypeptide is DNA ligase (Klebsiella pneumoniae (strain 342)).